A 1002-amino-acid polypeptide reads, in one-letter code: Collagen alpha-2(I) chain (1002 aa).

The disordered stretch occupies residues 1–1002 (SGGFDFSFLP…PGPPGPPGAS (1002 aa)). 4-hydroxyproline is present on residues Pro10, Pro13, Pro28, and Pro34. Residues 17–60 (GPMGLMGPRGPPGASGAPGPQGFQGPAGEPGEPGQTGPAGARGP) show a composition bias toward low complexity. A 5-hydroxylysine; alternate modification is found at Lys89. The O-linked (Gal...) hydroxylysine; alternate glycan is linked to Lys89. Low complexity-rich tracts occupy residues 145–166 (SRGS…SAGP) and 211–232 (PGAN…AGAP). Gly residues predominate over residues 266–275 (GESGGKGEPG). Low complexity predominate over residues 276-286 (SAGPQGPPGSS). Positions 308–317 (GLRGGPGSRG) are enriched in gly residues. Residues 330–346 (PAGARGASGPAGVRGPS) are compositionally biased toward low complexity. 2 positions are modified to 4-hydroxyproline: Pro352 and Pro355. The span at 381-400 (LPGIDGRPGPIGPAGARGEA) shows a compositional bias: low complexity. Residues 449-458 (GVQGGKGEQG) show a composition bias toward gly residues. Low complexity-rich tracts occupy residues 505 to 522 (PGES…SRGP) and 534 to 544 (EPGVVGAPGTA). The segment covering 545-554 (GPAGSGGLPG) has biased composition (gly residues). Composition is skewed to low complexity over residues 577 to 621 (VGTT…PRGS) and 628 to 648 (VGPA…QPGA). Residues 649–658 (KGERGTKGPK) are compositionally biased toward basic and acidic residues. Positions 666–676 (PTGPVGSAGPA) are enriched in low complexity. The segment covering 686 to 695 (GSRGDGGPPG) has biased composition (gly residues). The span at 697–706 (TGFPGAAGRT) shows a compositional bias: low complexity. Residues 743–752 (GETGAGGPPG) are compositionally biased toward gly residues. Low complexity-rich tracts occupy residues 760–787 (SGEP…LGLP) and 795–805 (LPGVAGAVGEP). Over residues 806-828 (GPLGIGPPGARGPSGGVGPGVNG) the composition is skewed to gly residues. The span at 833–851 (AGRDGPPGRDGLPGHKGER) shows a compositional bias: basic and acidic residues. A compositionally biased stretch (low complexity) spans 853–898 (YAGNAGPVGAAGAPGPHGAVGPAGKHGNRGEPGPVGSAGPVGALGP). The span at 908–919 (RGDKGEAGDKGP) shows a compositional bias: basic and acidic residues. A compositionally biased stretch (pro residues) spans 987 to 1002 (SGPPGPPGPPGPPGAS).

This sequence belongs to the fibrillar collagen family. In terms of assembly, trimers of one alpha 2(I) and two alpha 1(I) chains. Interacts (via C-terminus) with TMEM131 (via PapD-L domain); the interaction is direct and is involved in assembly and TRAPPIII ER-to-Golgi transport complex-dependent secretion of collagen. In terms of processing, prolines at the third position of the tripeptide repeating unit (G-X-Y) are hydroxylated in some or all of the chains. Expressed in bones.

It localises to the secreted. The protein resides in the extracellular space. It is found in the extracellular matrix. Type I collagen is a member of group I collagen (fibrillar forming collagen). This is Collagen alpha-2(I) chain from Glossotherium robustum (Ground sloth).